We begin with the raw amino-acid sequence, 88 residues long: MYNPKEHFSMSRIAKGLALTSVAAAAVAGTAGVAAADSGAQAAAAHSPGVLSGNVVQVPVHIPVNVCGNTIDVIGLLNPAFGNECEND.

The first 36 residues, 1–36, serve as a signal peptide directing secretion; that stretch reads MYNPKEHFSMSRIAKGLALTSVAAAAVAGTAGVAAA. The Chaplin domain maps to 47–87; the sequence is SPGVLSGNVVQVPVHIPVNVCGNTIDVIGLLNPAFGNECEN. A disulfide bridge connects residues cysteine 67 and cysteine 85.

Belongs to the chaplin family. Short chaplin subfamily. In terms of assembly, homodimer; disulfide linked. About 20% of ChpF isolated from cell wall forms disulfide-bonded homodimers.

It is found in the cell surface. The protein localises to the secreted. Its subcellular location is the cell wall. The protein resides in the fimbrium. Its function is as follows. One of 8 partially redundant surface-active proteins required for efficient formation of aerial mycelium; the short chaplins assemble into a hydrophobic, amyloidal fibrillar surface layer that envelopes and protects aerial hyphae and spores, presumably anchored to the long chaplins. Chaplins have an overlapping function with the surface-active SapB peptide; chaplins are essential on minimal medium while on rich medium both chaplins and SapB are required for efficient aerial hyphae formation. Chaplins are also involved in cell attachment to a hydrophobic surface. Forms amyloid fibrils in vitro probably composed of stacked beta-sheets, at low extracellular concentrations individually restores the ability to form aerial hyphae to a chaplin-deficient strain. A small chaplin extract (ChpD, ChpE, ChpF, ChpG and ChpH) self-assembles into 2 different amyloids; small fibrils at the air-water interface form an amphipathic membrane that resembles spore-surface structures involved in aerial hyphae formation, and hydrophilic fibrils in solution that resemble the fibers that attach cells to a hydrophobic surface. At the air-water interface the hydrophilic surface is in contact with water (probably equivalent to the peptidoglycan layer), while the hydrophobic face is exposed to the air, making the surface of the aerial hyphae hydrophobic. A small chaplin extract applied to a chaplin-deficient strain restores aerial hyphae formation. The small chaplin extract forms an amyloid-like structure similar to that seen on the surface of cells without rodlets (rdlA-rdlB deletions), and is highly surface active, reducing surface tension from 72 to 26 mJ/m(2), which probably allows escape of hyphae from an aqueous environment into air. ChpF alone is less surface active at pH 3.0 than at pH 10.0, it reduces the surface tension of water from 72.8 mN/m to 50 mN/m at pH 3.0 or to 37 mN/m at pH 10.0. ChpF and ChpG are sufficient to restore the rodlet layer and hydrophobicity to a strain deleted for the other 6 chaplin genes. In Streptomyces coelicolor (strain ATCC BAA-471 / A3(2) / M145), this protein is Chaplin-F.